The following is a 129-amino-acid chain: Large ribosomal subunit protein bL32m (129 aa).

Residues 1–63 (MAAMTAAAAA…LEDIWEGILR (63 aa)) constitute a mitochondrion transit peptide. Positions 94, 97, 107, and 110 each coordinate Zn(2+).

Belongs to the bacterial ribosomal protein bL32 family. As to quaternary structure, component of the mitochondrial large ribosomal subunit (mt-LSU). Mature N.crassa 74S mitochondrial ribosomes consist of a small (37S) and a large (54S) subunit. The 37S small subunit contains a 16S ribosomal RNA (16S mt-rRNA) and 32 different proteins. The 54S large subunit contains a 23S rRNA (23S mt-rRNA) and 42 different proteins. bL32m has a zinc binding site. MRPL32 precursor is processed by the m-AAA protease (composed of YTA12/RCA1 and YTA10/AFG3), which cleaves the N-terminal transit peptide. Cleavage by the m-AAA protease takes place prior to assembly into the large subunit, an essential step for mitochondrial ribosome (mitoribosome) assembly. Proper processing by the m-AAA protease is dependent on the zinc-binding region within the tightly folded C-terminal domain of MRPL32: zinc-dependent folding halts degradation initiated from the N-terminus and triggers the release of mature MRPL32.

The protein resides in the mitochondrion. Its function is as follows. Component of the mitochondrial ribosome (mitoribosome), a dedicated translation machinery responsible for the synthesis of mitochondrial genome-encoded proteins, including at least some of the essential transmembrane subunits of the mitochondrial respiratory chain. The mitoribosomes are attached to the mitochondrial inner membrane and translation products are cotranslationally integrated into the membrane. The polypeptide is Large ribosomal subunit protein bL32m (mrpl32) (Neurospora crassa (strain ATCC 24698 / 74-OR23-1A / CBS 708.71 / DSM 1257 / FGSC 987)).